The following is a 220-amino-acid chain: Octanoyltransferase (220 aa).

The region spanning 29 to 217 is the BPL/LPL catalytic domain; that stretch reads GRAPEMIWLL…CFEETFGPLP (189 aa). Substrate contacts are provided by residues 68–75, 148–150, and 161–163; these read RGGQYTYH, AIG, and GLS. C179 serves as the catalytic Acyl-thioester intermediate.

The protein belongs to the LipB family.

It localises to the cytoplasm. It catalyses the reaction octanoyl-[ACP] + L-lysyl-[protein] = N(6)-octanoyl-L-lysyl-[protein] + holo-[ACP] + H(+). It functions in the pathway protein modification; protein lipoylation via endogenous pathway; protein N(6)-(lipoyl)lysine from octanoyl-[acyl-carrier-protein]: step 1/2. Its function is as follows. Catalyzes the transfer of endogenously produced octanoic acid from octanoyl-acyl-carrier-protein onto the lipoyl domains of lipoate-dependent enzymes. Lipoyl-ACP can also act as a substrate although octanoyl-ACP is likely to be the physiological substrate. The chain is Octanoyltransferase from Dinoroseobacter shibae (strain DSM 16493 / NCIMB 14021 / DFL 12).